A 199-amino-acid chain; its full sequence is Octanoyltransferase (199 aa).

One can recognise a BPL/LPL catalytic domain in the interval 27–199; the sequence is SNSYDELWLL…FVQYFLTQFK (173 aa). Residues 66-73, 133-135, and 146-148 contribute to the substrate site; these read RGGQVTYH, SIG, and GIA. Catalysis depends on cysteine 164, which acts as the Acyl-thioester intermediate.

The protein belongs to the LipB family.

It is found in the cytoplasm. It carries out the reaction octanoyl-[ACP] + L-lysyl-[protein] = N(6)-octanoyl-L-lysyl-[protein] + holo-[ACP] + H(+). It participates in protein modification; protein lipoylation via endogenous pathway; protein N(6)-(lipoyl)lysine from octanoyl-[acyl-carrier-protein]: step 1/2. Functionally, catalyzes the transfer of endogenously produced octanoic acid from octanoyl-acyl-carrier-protein onto the lipoyl domains of lipoate-dependent enzymes. Lipoyl-ACP can also act as a substrate although octanoyl-ACP is likely to be the physiological substrate. This chain is Octanoyltransferase, found in Legionella pneumophila (strain Lens).